The following is a 72-amino-acid chain: Long neurotoxin OH-17 (72 aa).

5 cysteine pairs are disulfide-bonded: Cys-3–Cys-21, Cys-14–Cys-42, Cys-27–Cys-31, Cys-46–Cys-57, and Cys-58–Cys-63.

This sequence belongs to the three-finger toxin family. Long-chain subfamily. Type II alpha-neurotoxin sub-subfamily. In terms of tissue distribution, expressed by the venom gland.

The protein resides in the secreted. Functionally, binds with high affinity to muscular (alpha-1/CHRNA1) and neuronal (alpha-7/CHRNA7) nicotinic acetylcholine receptor (nAChR) and inhibits acetylcholine from binding to the receptor, thereby impairing neuromuscular and neuronal transmission. This Ophiophagus hannah (King cobra) protein is Long neurotoxin OH-17.